The following is a 37-amino-acid chain: Large ribosomal subunit protein bL36 (37 aa).

Belongs to the bacterial ribosomal protein bL36 family.

This Aliivibrio fischeri (strain ATCC 700601 / ES114) (Vibrio fischeri) protein is Large ribosomal subunit protein bL36.